The sequence spans 910 residues: Putative coatomer subunit beta'-3 (910 aa).

WD repeat units lie at residues glutamine 13–serine 52, valine 55–valine 94, alanine 97–glutamine 136, glycine 140–threonine 180, glycine 183–threonine 224, glycine 227–threonine 266, tyrosine 269–aspartate 309, threonine 351–leucine 393, and arginine 461–aspartate 501. Residues glutamate 865–glycine 884 show a composition bias toward acidic residues. The interval glutamate 865–alanine 910 is disordered. Residues threonine 886–alanine 910 show a composition bias toward polar residues.

Belongs to the WD repeat COPB2 family. As to quaternary structure, oligomeric complex that consists of at least the alpha, beta, beta', gamma, delta, epsilon and zeta subunits.

It is found in the cytoplasm. It localises to the golgi apparatus membrane. Its subcellular location is the cytoplasmic vesicle. The protein resides in the COPI-coated vesicle membrane. The coatomer is a cytosolic protein complex that binds to dilysine motifs and reversibly associates with Golgi non-clathrin-coated vesicles, which further mediate biosynthetic protein transport from the ER, via the Golgi up to the trans Golgi network. Coatomer complex is required for budding from Golgi membranes, and is essential for the retrograde Golgi-to-ER transport of dilysine-tagged proteins. The polypeptide is Putative coatomer subunit beta'-3 (Oryza sativa subsp. japonica (Rice)).